The chain runs to 473 residues: B box and SPRY domain-containing protein (473 aa).

The interval 1–69 (MSADVSGTES…PKQGSERSQL (69 aa)) is disordered. Residues 35-51 (KPGPGPEPRPESGPEPG) show a composition bias toward pro residues. The segment at 65 to 113 (ERSQLCPEHFEPLSWFCLSERRPVCATCAGFGGRCHRHRIRRAEEHAEE) adopts a B box-type zinc-finger fold. One can recognise a B30.2/SPRY domain in the interval 259–455 (SPLLTQLWAA…ISIVRGPLAT (197 aa)).

In terms of assembly, interacts with YWHAZ/14-3-3 protein zeta. Interacts with TRPV5 and TRPV6. In terms of tissue distribution, according to PubMed:10978534, testis-specific. According to PubMed:16371431, broadly expressed.

The protein localises to the cytoplasm. It is found in the membrane. Functionally, may regulate epithelial calcium transport by inhibiting TRPV5 activity. This chain is B box and SPRY domain-containing protein (Bspry), found in Mus musculus (Mouse).